The sequence spans 68 residues: uncharacterized protein (68 aa).

Residues 1-68 (METIIRRFSP…GNSKNIKTKK (68 aa)) form a disordered region. Over residues 9–34 (SPKEKEKEKEKEEKDEKSKDKKEPIK) the composition is skewed to basic and acidic residues. Residues 42 to 51 (DEEEEEDEQE) are compositionally biased toward acidic residues.

This is an uncharacterized protein from Dictyostelium discoideum (Social amoeba).